A 409-amino-acid chain; its full sequence is Pleckstrin homology domain-containing family O member 1 (409 aa).

Residues 1 to 24 form a disordered region; that stretch reads MMKKNNSAKRGPQDGNQQPAPPEK. Positions 21–132 constitute a PH domain; it reads PPEKVGWVRK…WINALNSAIT (112 aa). Residues 133–193 form an interaction with capping proteins (CPs) region; the sequence is RAKNRILDEV…MLTLDLIQEE (61 aa). The segment at 136 to 308 is interaction with ATM, CKIP, IFP35 and NMI; that stretch reads NRILDEVTVE…LPNPGQLSRI (173 aa). Residues 218–267 form a disordered region; that stretch reads LAGSRRRADSDRIQPSADRASSLSRPWEKTDKGATYTPQAPKKLTPTEKG. Ser227 and Ser271 each carry phosphoserine. The interval 308-409 is negative regulator of AP-1 activity; sequence IQDLVARKLE…PHSQYRKSLM (102 aa). Disordered stretches follow at residues 325–350 and 390–409; these read EVQG…ESEQ and TPDS…KSLM. A compositionally biased stretch (basic and acidic residues) spans 331-340; that stretch reads DGKRKAKDPP. Phosphoserine is present on Ser342. Over residues 390 to 402 the composition is skewed to polar residues; sequence TPDSHLRQTTPHS.

In terms of assembly, heterodimer or homodimer. Interacts with CK2 and actin capping subunits (capping protein CP-alpha and CP-beta). CKIP1 and CK2 together inhibit the activity of actin capping protein at the barbed ends of actin filaments. Interacts with ATM, IFP35, JUN, JUND, NMI and PI3K. Interacts with AKT1, AKT2 and AKT3 (each isozyme of PKB), PtdIns(3,5)P2, PtdIns(4,5)P2 and PtdIns(3,4,5)P2. Post-translationally, C-terminal fragments could be released during apoptosis via caspase-3-dependent cleavage. Abundantly expressed in skeletal muscle and heart, moderately in kidney, liver, brain and placenta and sparingly in the pancreas and lung. Easily detectable in cell lines such as MOLT-4, HEK293 and Jurkat.

The protein resides in the cell membrane. The protein localises to the nucleus. It localises to the cytoplasm. Its function is as follows. Plays a role in the regulation of the actin cytoskeleton through its interactions with actin capping protein (CP). May function to target CK2 to the plasma membrane thereby serving as an adapter to facilitate the phosphorylation of CP by protein kinase 2 (CK2). Appears to target ATM to the plasma membrane. Appears to also inhibit tumor cell growth by inhibiting AKT-mediated cell-survival. Also implicated in PI3K-regulated muscle differentiation, the regulation of AP-1 activity (plasma membrane bound AP-1 regulator that translocates to the nucleus) and the promotion of apoptosis induced by tumor necrosis factor TNF. When bound to PKB, it inhibits it probably by decreasing PKB level of phosphorylation. In Homo sapiens (Human), this protein is Pleckstrin homology domain-containing family O member 1 (PLEKHO1).